A 358-amino-acid polypeptide reads, in one-letter code: WD repeat-containing protein 53 (358 aa).

WD repeat units follow at residues 8 to 47, 92 to 131, 134 to 174, 195 to 234, and 239 to 278; these read GHSSSILCLNANKDGLVASGGEGGDLVAWGEDGTPLGHMQ, VNEEEINCLSLNETESLLASADDSGAIKILDLEKKKVTRS, RHSN…PVWI, LNPALAHSVSVASCGNIFSCGAEDGKVRIFRVMGVKCERE, and GHTLGVSQVCFLPESSLLLTGGNDGRIRLWDVSGKMEKLQ. Residues 288 to 309 are disordered; sequence KKAKRAACPTQGGNSRAPGAED.

Belongs to the WD repeat WDR53 family.

This chain is WD repeat-containing protein 53 (Wdr53), found in Mus musculus (Mouse).